Reading from the N-terminus, the 180-residue chain is Large ribosomal subunit protein uL6 (180 aa).

This sequence belongs to the universal ribosomal protein uL6 family. As to quaternary structure, part of the 50S ribosomal subunit.

Functionally, this protein binds to the 23S rRNA, and is important in its secondary structure. It is located near the subunit interface in the base of the L7/L12 stalk, and near the tRNA binding site of the peptidyltransferase center. In Lachnoclostridium phytofermentans (strain ATCC 700394 / DSM 18823 / ISDg) (Clostridium phytofermentans), this protein is Large ribosomal subunit protein uL6.